The primary structure comprises 953 residues: ATP-dependent 6-phosphofructokinase (953 aa).

Residues 1–558 form an N-terminal catalytic PFK domain 1 region; it reads MIEGISFASF…QLQGFLLTNS (558 aa). ATP is bound by residues G193, 256-257, and 286-289; these read RC and GDGS. D287 contributes to the Mg(2+) binding site. Substrate is bound by residues 332 to 334, R369, 376 to 378, E433, R460, and 466 to 469; these read SID, MGR, and HVQR. The active-site Proton acceptor is the D334. Positions 559 to 572 are interdomain linker; the sequence is ADKDRPQEPAKDPL. The C-terminal regulatory PFK domain 2 stretch occupies residues 573–953; that stretch reads RVAIVCTGAP…AKEQGIIDPC (381 aa). Beta-D-fructose 2,6-bisphosphate is bound by residues R645, 702–706, R740, 747–749, E807, R833, 839–842, and R906; these read TISNN, QGG, and HVQQ.

Belongs to the phosphofructokinase type A (PFKA) family. ATP-dependent PFK group I subfamily. Eukaryotic two domain clade 'E' sub-subfamily. Heterooctamer of 4 alpha and 4 beta chains. Requires Mg(2+) as cofactor.

Its subcellular location is the cytoplasm. It carries out the reaction beta-D-fructose 6-phosphate + ATP = beta-D-fructose 1,6-bisphosphate + ADP + H(+). Its pathway is carbohydrate degradation; glycolysis; D-glyceraldehyde 3-phosphate and glycerone phosphate from D-glucose: step 3/4. With respect to regulation, allosterically activated by ADP, AMP, or fructose 2,6-bisphosphate, and allosterically inhibited by ATP or citrate. Its function is as follows. Catalyzes the phosphorylation of D-fructose 6-phosphate to fructose 1,6-bisphosphate by ATP, the first committing step of glycolysis. This Yarrowia lipolytica (strain CLIB 122 / E 150) (Yeast) protein is ATP-dependent 6-phosphofructokinase (PFK1).